A 348-amino-acid polypeptide reads, in one-letter code: F-box protein At2g20380 (348 aa).

The F-box domain maps to 14–60 (SPESNSLPNDLIVTILARLSQSYYPKLSLVSKTFRAILASPELYQTR).

The chain is F-box protein At2g20380 from Arabidopsis thaliana (Mouse-ear cress).